The sequence spans 95 residues: Large ribosomal subunit protein bL25 (95 aa).

The protein belongs to the bacterial ribosomal protein bL25 family. In terms of assembly, part of the 50S ribosomal subunit; part of the 5S rRNA/L5/L18/L25 subcomplex. Contacts the 5S rRNA. Binds to the 5S rRNA independently of L5 and L18.

In terms of biological role, this is one of the proteins that binds to the 5S RNA in the ribosome where it forms part of the central protuberance. This chain is Large ribosomal subunit protein bL25, found in Shewanella sp. (strain ANA-3).